We begin with the raw amino-acid sequence, 290 residues long: Diaminopimelate epimerase (290 aa).

Residues N11 and N78 each contribute to the substrate site. The active-site Proton donor is the C87. Residues 88-89 (GN), N163, N199, and 217-218 (ER) each bind substrate. C226 functions as the Proton acceptor in the catalytic mechanism. 227–228 (GT) serves as a coordination point for substrate.

This sequence belongs to the diaminopimelate epimerase family. As to quaternary structure, homodimer.

It is found in the cytoplasm. The catalysed reaction is (2S,6S)-2,6-diaminopimelate = meso-2,6-diaminopimelate. It participates in amino-acid biosynthesis; L-lysine biosynthesis via DAP pathway; DL-2,6-diaminopimelate from LL-2,6-diaminopimelate: step 1/1. Its function is as follows. Catalyzes the stereoinversion of LL-2,6-diaminopimelate (L,L-DAP) to meso-diaminopimelate (meso-DAP), a precursor of L-lysine and an essential component of the bacterial peptidoglycan. This is Diaminopimelate epimerase from Mycobacterium ulcerans (strain Agy99).